The primary structure comprises 229 residues: Prolactin (229 aa).

The signal sequence occupies residues 1–30 (MDSKGSAQKGSRLLLLLVVSNLLLCQGVVS). The cysteines at positions 34 and 41 are disulfide-linked. S56 is subject to Phosphoserine. Residue N61 is glycosylated (N-linked (GlcNAc...) asparagine; partial). S64 and S120 each carry phosphoserine. Disulfide bonds link C88–C204 and C221–C229.

The protein belongs to the somatotropin/prolactin family. Interacts with PRLR.

It is found in the secreted. Prolactin acts primarily on the mammary gland by promoting lactation, mammogenesis, mitogenesis and osmoregulation. This is Prolactin (PRL) from Ovis aries (Sheep).